A 78-amino-acid chain; its full sequence is Protein Class8-like (78 aa).

Positions 1–19 are cleaved as a signal peptide; that stretch reads MRTLVVLLIGAVLLCSANA. A propeptide spanning residues 20–36 is cleaved from the precursor; sequence FLDELLAESVNDMTDKR. One can recognise a ShKT domain in the interval 38–78; the sequence is CFDKYKSNICGGVISPAHCVRRSGRMAKFAKENCAHFCGFC. Cystine bridges form between cysteine 38/cysteine 78, cysteine 47/cysteine 71, and cysteine 56/cysteine 75.

In terms of tissue distribution, expressed in ganglion neurons residing in the mesoglea (observed in both planulae and primary polyps). Not expressed in nematocytes.

Probable neuropeptide. The sequence is that of Protein Class8-like from Nematostella vectensis (Starlet sea anemone).